The primary structure comprises 446 residues: Tripartite motif-containing protein 43C (446 aa).

Residues 16-57 (CSICQGIFMDPVYLRCGHKFCETCLLLFQEDIKFPAYCPTCR) form an RING-type zinc finger. Residues 88 to 129 (SEEHKCVTHKAKKMIFCDKSKILLCHLCSDSQEHSGHTHCSI) form a B box-type zinc finger. Zn(2+)-binding residues include Cys-93, His-96, Cys-115, and His-121. The 176-residue stretch at 271 to 446 (RLRAHSIPGL…VRPFFFAAYT (176 aa)) folds into the B30.2/SPRY domain.

This sequence belongs to the TRIM/RBCC family.

This is Tripartite motif-containing protein 43C from Mus musculus (Mouse).